We begin with the raw amino-acid sequence, 712 residues long: Frizzled-6 (712 aa).

The first 18 residues, 1–18 (MEMFTFLLTCVFLPFVRG), serve as a signal peptide directing secretion. In terms of domain architecture, FZ spans 19–132 (HSLFTCEPIT…CDRLQYCDET (114 aa)). Residues 19–201 (HSLFTCEPIT…SDELEFAKSF (183 aa)) lie on the Extracellular side of the membrane. 5 disulfides stabilise this stretch: Cys-24–Cys-85, Cys-32–Cys-78, Cys-69–Cys-106, Cys-95–Cys-129, and Cys-99–Cys-123. N-linked (GlcNAc...) asparagine glycosylation is present at Asn-38. The helical transmembrane segment at 202 to 222 (IGIVSIFCLCATLFTFLTFLI) threads the bilayer. Residues 223 to 233 (DVKRFRYPERP) lie on the Cytoplasmic side of the membrane. The chain crosses the membrane as a helical span at residues 234-254 (IIYYSVCYSIVSLMYFIGFLL). Over 255–284 (GDRTACNKADEKLELGDTVVLGSQNKACTV) the chain is Extracellular. A helical membrane pass occupies residues 285-305 (LFMFLYFFTMAGTVWWVILTI). The Cytoplasmic segment spans residues 306-324 (TWFLAAGRKWSCEAIEQKA). Residues 325 to 345 (VWFHAVAWGIPGFLTVMLLAM) traverse the membrane as a helical segment. Over 346 to 370 (NKVEGDNISGVCFVGLYDLDASRYF) the chain is Extracellular. N-linked (GlcNAc...) asparagine glycosylation is present at Asn-352. The helical transmembrane segment at 371-391 (VLLPLCLCVFVGLSLLLAGII) threads the bilayer. The Cytoplasmic segment spans residues 392-416 (SLNHVRQVIQHDGRNQEKLKKFMIR). The helical transmembrane segment at 417-437 (IGVFSGLYLVPLVTLLGCYVY) threads the bilayer. Residues 438 to 473 (EQVNRITWEITWVSDHCRQYHIPCPYQAKTETRPEL) lie on the Extracellular side of the membrane. The helical transmembrane segment at 474 to 494 (ALFMIKYLMTLIVGISAVFWV) threads the bilayer. Residues 495 to 712 (GSKKTCTEWA…EHGTGSHSDT (218 aa)) lie on the Cytoplasmic side of the membrane. The Lys-Thr-X-X-X-Trp motif, mediates interaction with the PDZ domain of Dvl family members signature appears at 498–503 (KTCTEW). The disordered stretch occupies residues 588 to 712 (EIQTSPETSV…EHGTGSHSDT (125 aa)). Basic and acidic residues-rich tracts occupy residues 628 to 637 (LCEEQADRKG) and 652 to 664 (TRSE…KSDV). Positions 668–693 (GPMQSSSLQVPGSSEPGSLKGSTSLL) are enriched in polar residues. A compositionally biased stretch (basic and acidic residues) spans 700–712 (GRKEHGTGSHSDT).

The protein belongs to the G-protein coupled receptor Fz/Smo family. In terms of assembly, interacts with LMBR1L. Post-translationally, ubiquitinated by ZNRF3, leading to its degradation by the proteasome.

It is found in the membrane. Its subcellular location is the cell membrane. The protein localises to the cell surface. The protein resides in the apical cell membrane. It localises to the cytoplasmic vesicle membrane. It is found in the endoplasmic reticulum membrane. In terms of biological role, receptor for Wnt proteins. Most of frizzled receptors are coupled to the beta-catenin canonical signaling pathway, which leads to the activation of disheveled proteins, inhibition of GSK-3 kinase, nuclear accumulation of beta-catenin and activation of Wnt target genes. A second signaling pathway involving PKC and calcium fluxes has been seen for some family members, but it is not yet clear if it represents a distinct pathway or if it can be integrated in the canonical pathway, as PKC seems to be required for Wnt-mediated inactivation of GSK-3 kinase. Both pathways seem to involve interactions with G-proteins. Activation by Wnt5A stimulates PKC activity via a G-protein-dependent mechanism. Involved in transduction and intercellular transmission of polarity information during tissue morphogenesis and/or in differentiated tissues. Together with FZD3, is involved in the neural tube closure and plays a role in the regulation of the establishment of planar cell polarity (PCP), particularly in the orientation of asymmetric bundles of stereocilia on the apical faces of a subset of auditory and vestibular sensory cells located in the inner ear. The polypeptide is Frizzled-6 (FZD6) (Canis lupus familiaris (Dog)).